We begin with the raw amino-acid sequence, 736 residues long: uncharacterized protein (736 aa).

2 ABC transporter domains span residues 183–459 (IKID…KQME) and 518–734 (LQMS…TMTI). ATP-binding positions include 215 to 222 (GRNGIGKS) and 551 to 558 (GPNGAGKS).

It belongs to the ABC transporter superfamily.

Its subcellular location is the cytoplasm. This is an uncharacterized protein from Schizosaccharomyces pombe (strain 972 / ATCC 24843) (Fission yeast).